Here is a 769-residue protein sequence, read N- to C-terminus: Type IV pilus biogenesis and competence protein PilQ (769 aa).

Residues 1–24 (MNTKLTKIISGLFVATAAFQTASA) form the signal peptide. 2 stretches are compositionally biased toward low complexity: residues 135–154 (ARPA…AAAP) and 197–225 (ASAK…PAKQ). 2 disordered regions span residues 135–156 (ARPA…APST) and 197–228 (ASAK…QTNI).

This sequence belongs to the bacterial secretin family. PilQ subfamily. In terms of assembly, homododecamer. Tetramer of trimer.

It localises to the cell outer membrane. In terms of biological role, required for type IV pilus biogenesis and competence. Could function as a pore for exit of the pilus but also as a channel for entry of heme and antimicrobial agents and uptake of transforming DNA. This Neisseria meningitidis serogroup B (strain ATCC BAA-335 / MC58) protein is Type IV pilus biogenesis and competence protein PilQ (pilQ).